The primary structure comprises 352 residues: Protein MGF 360-9L (352 aa).

Belongs to the asfivirus MGF 360 family. In terms of assembly, interacts with host STAT1; this interaction mediates STAT1 degradation through apoptosis. Interacts with host STAT2; this interaction mediates STAT2 degradation through the proteasome.

It localises to the host cytoplasm. Plays a role in virus cell tropism, and may be required for efficient virus replication in macrophages. This is Protein MGF 360-9L from Ornithodoros (relapsing fever ticks).